Here is a 277-residue protein sequence, read N- to C-terminus: Large ribosomal subunit protein uL2 (277 aa).

The tract at residues 222–277 (GVTMNPVDHPHGGGEGRTSGGRHPVTPWGKPTKGKKTRSNKSTNKFILISRHKRKK) is disordered.

It belongs to the universal ribosomal protein uL2 family. Part of the 50S ribosomal subunit. Forms a bridge to the 30S subunit in the 70S ribosome.

Functionally, one of the primary rRNA binding proteins. Required for association of the 30S and 50S subunits to form the 70S ribosome, for tRNA binding and peptide bond formation. It has been suggested to have peptidyltransferase activity; this is somewhat controversial. Makes several contacts with the 16S rRNA in the 70S ribosome. This Rhodopseudomonas palustris (strain BisB18) protein is Large ribosomal subunit protein uL2.